We begin with the raw amino-acid sequence, 140 residues long: Large ribosomal subunit protein uL16 (140 aa).

The tract at residues 1–24 (MALAPARTKYRKSQKGSRAGNAKR) is disordered.

It belongs to the universal ribosomal protein uL16 family. In terms of assembly, part of the 50S ribosomal subunit.

In terms of biological role, binds 23S rRNA and is also seen to make contacts with the A and possibly P site tRNAs. This chain is Large ribosomal subunit protein uL16, found in Opitutus terrae (strain DSM 11246 / JCM 15787 / PB90-1).